The sequence spans 188 residues: UPF0301 protein PsycPRwf_0144 (188 aa).

Belongs to the UPF0301 (AlgH) family.

This chain is UPF0301 protein PsycPRwf_0144, found in Psychrobacter sp. (strain PRwf-1).